Reading from the N-terminus, the 154-residue chain is Ribonuclease H (154 aa).

Residues 3-144 (ELPVVTIYTD…ADQLARDGIV (142 aa)) form the RNase H type-1 domain. 4 residues coordinate Mg(2+): D12, E50, D72, and D136.

The protein belongs to the RNase H family. As to quaternary structure, monomer. It depends on Mg(2+) as a cofactor.

The protein localises to the cytoplasm. It catalyses the reaction Endonucleolytic cleavage to 5'-phosphomonoester.. Its function is as follows. Endonuclease that specifically degrades the RNA of RNA-DNA hybrids. The chain is Ribonuclease H from Bradyrhizobium diazoefficiens (strain JCM 10833 / BCRC 13528 / IAM 13628 / NBRC 14792 / USDA 110).